Consider the following 810-residue polypeptide: RING finger protein unkempt homolog (810 aa).

The disordered stretch occupies residues 1 to 24 (MSKGPGPGGSAASSAPPAATAQVL). Residues 10-19 (SAASSAPPAA) are compositionally biased toward low complexity. 5 consecutive C3H1-type zinc fingers follow at residues 84-113 (YSPD…HRTT), 124-154 (YYKT…HGPH), 215-241 (NYKT…HNSK), 251-285 (KYRS…HTRT), and 293-321 (IYKS…HIEP). The segment at 239–265 (NSKDRRRSPRKHKYRSSPCPNVKHGDE) is disordered. Ser-240 carries the phosphoserine modification. Residues 241 to 253 (KDRRRSPRKHKYR) are compositionally biased toward basic residues. Ser-374, Ser-378, Ser-385, and Ser-394 each carry phosphoserine. The segment at 478 to 497 (TSSLAATPPSPAGTNSTPGM) is disordered. Ser-631 carries the phosphoserine modification. Residues 643–727 (GAAELARLRQ…ERLHTVPEAQ (85 aa)) adopt a coiled-coil conformation. Residues 766 to 801 (SVKCLKCQEQTRAVLPCQHAVLCELCAEGSECPVCQ) form an RING-type; degenerate zinc finger.

This sequence belongs to the unkempt family.

It is found in the cytoplasm. Sequence-specific RNA-binding protein which plays an important role in the establishment and maintenance of the early morphology of cortical neurons during embryonic development. Acts as a translation repressor and controls a translationally regulated cell morphology program to ensure proper structuring of the nervous system. Translational control depends on recognition of its binding element within target mRNAs which consists of a mandatory UAG trimer upstream of a U/A-rich motif. Associated with polysomes. The polypeptide is RING finger protein unkempt homolog (Unk) (Mus musculus (Mouse)).